The following is a 514-amino-acid chain: 2-isopropylmalate synthase (514 aa).

The 263-residue stretch at 5–267 (LIIFDTTLRD…HTDIETREIV (263 aa)) folds into the Pyruvate carboxyltransferase domain. Residues D14, H202, H204, and N238 each coordinate Mn(2+). Residues 393–514 (KLVALRVCSE…QRTHPQVGDV (122 aa)) form a regulatory domain region.

The protein belongs to the alpha-IPM synthase/homocitrate synthase family. LeuA type 1 subfamily. In terms of assembly, homodimer. The cofactor is Mn(2+).

Its subcellular location is the cytoplasm. The enzyme catalyses 3-methyl-2-oxobutanoate + acetyl-CoA + H2O = (2S)-2-isopropylmalate + CoA + H(+). It participates in amino-acid biosynthesis; L-leucine biosynthesis; L-leucine from 3-methyl-2-oxobutanoate: step 1/4. Functionally, catalyzes the condensation of the acetyl group of acetyl-CoA with 3-methyl-2-oxobutanoate (2-ketoisovalerate) to form 3-carboxy-3-hydroxy-4-methylpentanoate (2-isopropylmalate). The chain is 2-isopropylmalate synthase from Methylococcus capsulatus (strain ATCC 33009 / NCIMB 11132 / Bath).